The following is a 317-amino-acid chain: Tenomodulin (317 aa).

At 1–30 the chain is on the cytoplasmic side; that stretch reads MAKNPPENCEGCHILNAEALKSKKICKSLK. A helical; Signal-anchor for type II membrane protein transmembrane segment spans residues 31–50; it reads ICGLVFGILALTLIVLFWGS. Topologically, residues 51–317 are extracellular; the sequence is KHFWPEVSKK…WWVARMLGRV (267 aa). The region spanning 93–186 is the BRICHOS domain; sequence GNGTDETLEV…ICDNVTMYWI (94 aa). Residue asparagine 94 is glycosylated (N-linked (GlcNAc...) asparagine). A disulfide bridge connects residues cysteine 120 and cysteine 178. Residue asparagine 180 is glycosylated (N-linked (GlcNAc...) asparagine). Residue serine 239 is modified to Phosphoserine.

It belongs to the chondromodulin-1 family. Widely expressed with highest expression in tendons and ligaments, in the diaphragm, eye and skeletal muscle. Expressed in neuronal cells of all brain regions. Very low expression, if any, in glial cells.

The protein resides in the membrane. The protein localises to the nucleus envelope. May be an angiogenesis inhibitor. In Mus musculus (Mouse), this protein is Tenomodulin (Tnmd).